The sequence spans 55 residues: Large ribosomal subunit protein bL33 (55 aa).

The protein belongs to the bacterial ribosomal protein bL33 family.

The sequence is that of Large ribosomal subunit protein bL33 from Beijerinckia indica subsp. indica (strain ATCC 9039 / DSM 1715 / NCIMB 8712).